Consider the following 310-residue polypeptide: Small ribosomal subunit biogenesis GTPase RsgA (310 aa).

Residues Leu77–Phe238 form the CP-type G domain. GTP contacts are provided by residues Asn126–Asp129 and Gly180–Thr188. Residues Cys262, Cys267, His269, and Cys275 each contribute to the Zn(2+) site.

This sequence belongs to the TRAFAC class YlqF/YawG GTPase family. RsgA subfamily. In terms of assembly, monomer. Associates with 30S ribosomal subunit, binds 16S rRNA. Requires Zn(2+) as cofactor.

The protein localises to the cytoplasm. In terms of biological role, one of several proteins that assist in the late maturation steps of the functional core of the 30S ribosomal subunit. Helps release RbfA from mature subunits. May play a role in the assembly of ribosomal proteins into the subunit. Circularly permuted GTPase that catalyzes slow GTP hydrolysis, GTPase activity is stimulated by the 30S ribosomal subunit. This chain is Small ribosomal subunit biogenesis GTPase RsgA, found in Phocaeicola vulgatus (strain ATCC 8482 / DSM 1447 / JCM 5826 / CCUG 4940 / NBRC 14291 / NCTC 11154) (Bacteroides vulgatus).